The primary structure comprises 332 residues: Glycerol-3-phosphate dehydrogenase [NAD(P)+] (332 aa).

NADPH is bound by residues Trp11, Arg30, and Lys108. Residues Lys108, Gly137, and Ser139 each contribute to the sn-glycerol 3-phosphate site. Position 141 (Ala141) interacts with NADPH. Residues Lys192, Asp245, Ser255, Arg256, and Asn257 each contribute to the sn-glycerol 3-phosphate site. The Proton acceptor role is filled by Lys192. Arg256 is a binding site for NADPH. 2 residues coordinate NADPH: Val280 and Glu282.

This sequence belongs to the NAD-dependent glycerol-3-phosphate dehydrogenase family.

Its subcellular location is the cytoplasm. The enzyme catalyses sn-glycerol 3-phosphate + NAD(+) = dihydroxyacetone phosphate + NADH + H(+). It catalyses the reaction sn-glycerol 3-phosphate + NADP(+) = dihydroxyacetone phosphate + NADPH + H(+). It functions in the pathway membrane lipid metabolism; glycerophospholipid metabolism. Catalyzes the reduction of the glycolytic intermediate dihydroxyacetone phosphate (DHAP) to sn-glycerol 3-phosphate (G3P), the key precursor for phospholipid synthesis. The protein is Glycerol-3-phosphate dehydrogenase [NAD(P)+] of Burkholderia cenocepacia (strain ATCC BAA-245 / DSM 16553 / LMG 16656 / NCTC 13227 / J2315 / CF5610) (Burkholderia cepacia (strain J2315)).